The sequence spans 824 residues: Leucine--tRNA ligase (824 aa).

Positions 42–52 (PYPSGRIHMGH) match the 'HIGH' region motif. The short motif at 581–585 (KMSKS) is the 'KMSKS' region element. Lys584 provides a ligand contact to ATP.

The protein belongs to the class-I aminoacyl-tRNA synthetase family.

The protein resides in the cytoplasm. It catalyses the reaction tRNA(Leu) + L-leucine + ATP = L-leucyl-tRNA(Leu) + AMP + diphosphate. The chain is Leucine--tRNA ligase from Geotalea daltonii (strain DSM 22248 / JCM 15807 / FRC-32) (Geobacter daltonii).